Reading from the N-terminus, the 309-residue chain is Aspartate carbamoyltransferase catalytic subunit (309 aa).

2 residues coordinate carbamoyl phosphate: Arg58 and Thr59. Lys87 contacts L-aspartate. Residues Arg108, His136, and Gln139 each contribute to the carbamoyl phosphate site. L-aspartate-binding residues include Arg168 and Arg229. Carbamoyl phosphate-binding residues include Leu268 and Pro269.

This sequence belongs to the aspartate/ornithine carbamoyltransferase superfamily. ATCase family. In terms of assembly, heterooligomer of catalytic and regulatory chains.

The catalysed reaction is carbamoyl phosphate + L-aspartate = N-carbamoyl-L-aspartate + phosphate + H(+). The protein operates within pyrimidine metabolism; UMP biosynthesis via de novo pathway; (S)-dihydroorotate from bicarbonate: step 2/3. Its function is as follows. Catalyzes the condensation of carbamoyl phosphate and aspartate to form carbamoyl aspartate and inorganic phosphate, the committed step in the de novo pyrimidine nucleotide biosynthesis pathway. This is Aspartate carbamoyltransferase catalytic subunit from Methanosarcina mazei (strain ATCC BAA-159 / DSM 3647 / Goe1 / Go1 / JCM 11833 / OCM 88) (Methanosarcina frisia).